The primary structure comprises 324 residues: tRNA dimethylallyltransferase (324 aa).

Residue 17–24 (GPTASGKT) coordinates ATP. 19–24 (TASGKT) serves as a coordination point for substrate. Interaction with substrate tRNA regions lie at residues 42-45 (DSAL), 166-170 (QRIQR), 251-256 (RCVGYR), and 284-291 (KRQITWLR).

The protein belongs to the IPP transferase family. Monomer. Requires Mg(2+) as cofactor.

The catalysed reaction is adenosine(37) in tRNA + dimethylallyl diphosphate = N(6)-dimethylallyladenosine(37) in tRNA + diphosphate. In terms of biological role, catalyzes the transfer of a dimethylallyl group onto the adenine at position 37 in tRNAs that read codons beginning with uridine, leading to the formation of N6-(dimethylallyl)adenosine (i(6)A). The protein is tRNA dimethylallyltransferase of Burkholderia lata (strain ATCC 17760 / DSM 23089 / LMG 22485 / NCIMB 9086 / R18194 / 383).